Here is a 493-residue protein sequence, read N- to C-terminus: Na(+)/H(+) antiporter subunit D (493 aa).

A run of 14 helical transmembrane segments spans residues 4-23 (LVIL…ILFA), 30-52 (RVIS…VDVY), 72-94 (LVAD…VCLF), 107-126 (YYFY…AFLT), 130-149 (FNLF…LIVL), 162-184 (YVVI…YSIT), 204-226 (VLNV…FPLY), 233-255 (YFGP…GIYA), 270-292 (FTHT…GAVS), 299-321 (ILSY…YTQL), 325-347 (GAIY…AGAT), 368-390 (WLAW…SGFF), 405-427 (YIIA…KIFI), and 448-470 (LLLP…EPIF).

It belongs to the CPA3 antiporters (TC 2.A.63) subunit D family. In terms of assembly, forms a heterooligomeric complex that consists of seven subunits: MrpA, MrpB, MrpC, MrpD, MrpE, MrpF and MrpG.

The protein localises to the cell membrane. In terms of biological role, mnh complex is a Na(+)Li(+)/H(+) antiporter involved in Na(+) and/or Li(+) excretion and Na(+) resistance. Na(+)/H(+) antiport consumes a transmembrane electrical potential, and is thus inferred to be electrogenic. Does not transport K(+), Ca(2+) or Mg(2+). Functionally, mrp complex is a Na(+)/H(+) antiporter involved in Na(+) excretion and Na(+) resistance. In Alkalihalophilus pseudofirmus (strain ATCC BAA-2126 / JCM 17055 / OF4) (Bacillus pseudofirmus), this protein is Na(+)/H(+) antiporter subunit D (mrpD).